Reading from the N-terminus, the 300-residue chain is Inosose dehydratase (300 aa).

It belongs to the IolE/MocC family. It depends on glutathione as a cofactor. Requires Co(2+) as cofactor. Mn(2+) is required as a cofactor.

The enzyme catalyses scyllo-inosose = 3D-3,5/4-trihydroxycyclohexane-1,2-dione + H2O. It participates in polyol metabolism; myo-inositol degradation into acetyl-CoA; acetyl-CoA from myo-inositol: step 2/7. Functionally, catalyzes the dehydration of inosose (2-keto-myo-inositol, 2KMI or 2,4,6/3,5-pentahydroxycyclohexanone) to 3D-(3,5/4)-trihydroxycyclohexane-1,2-dione (D-2,3-diketo-4-deoxy-epi-inositol). This chain is Inosose dehydratase, found in Bacillus licheniformis (strain ATCC 14580 / DSM 13 / JCM 2505 / CCUG 7422 / NBRC 12200 / NCIMB 9375 / NCTC 10341 / NRRL NRS-1264 / Gibson 46).